Reading from the N-terminus, the 50-residue chain is VVGGDECDINEHPFLAFLYSHGYFCGLTLINQEWVLTAAHCDRRFMRIYL.

In terms of domain architecture, Peptidase S1 spans 1–50 (VVGGDECDINEHPFLAFLYSHGYFCGLTLINQEWVLTAAHCDRRFMRIYL). An intrachain disulfide couples cysteine 25 to cysteine 41. Histidine 40 acts as the Charge relay system in catalysis.

The protein belongs to the peptidase S1 family. Snake venom subfamily. Monomer. N-glycosylated. As to expression, expressed by the venom gland.

It is found in the secreted. Inhibited by serine protease inhibitors PMSF, benzamidine, leupeptin and aprotinin, as well as by copper ions (Cu2+). Not inhibited by metalloprotease inhibitors EDTA, EGTA and 1,10-phenanthroline, as well as by barium (Ba2+) and calcium ion (Ca2+). Functionally, snake venom serine protease that interferes with the hemostatic system of the prey. It almost completely degrades both Aalpha (FGA) and Bbeta (FGB) chains of fibrinogen. It presents a higher ability to degrade fibrin clots than BpirSP27. It hydrolyzes chromogenic substrates S-2238 (used for testing thrombin activity), S-2222 (factor Xa), S-2266 (glandular kallikrein and factor XIa), and S-2302 (plasma kallikrein, factor XIa and XIIa). It shows a decrease in the clotting time of human plasma in the presence of increasing doses of the enzyme. Its minimum coagulant dose (MCD) is 20 ug. It promotes platelet aggregation with a maximum of aggregation of 20%, regardless of the concentration increase or the presence of calcium. It also shows 40% inhibition of the hemolytic activity promoted by the complement pathways and possess only a minor role in the induction of edema and pain in rat. The chain is Thrombin-like enzyme BpirSP41 from Bothrops pirajai (Piraja's lancehead).